A 173-amino-acid chain; its full sequence is NADH-ubiquinone oxidoreductase chain 6 (173 aa).

A run of 5 helical transmembrane segments spans residues 1–21 (MTYFVFFLSLCFVLGGLAVAS), 27–47 (YGVVGLVLASVAGCGWLLSLG), 48–68 (VSFVSLVLFMVYLGGMLVVFV), 91–111 (GVGFVGVLVMGLVVGGFIGCL), and 141–161 (VGMFLVAGWGLLLTLFVVLEL).

The protein belongs to the complex I subunit 6 family.

It is found in the mitochondrion membrane. It carries out the reaction a ubiquinone + NADH + 5 H(+)(in) = a ubiquinol + NAD(+) + 4 H(+)(out). In terms of biological role, core subunit of the mitochondrial membrane respiratory chain NADH dehydrogenase (Complex I) that is believed to belong to the minimal assembly required for catalysis. Complex I functions in the transfer of electrons from NADH to the respiratory chain. The immediate electron acceptor for the enzyme is believed to be ubiquinone. The chain is NADH-ubiquinone oxidoreductase chain 6 (MT-ND6) from Fratercula arctica (Atlantic puffin).